A 586-amino-acid chain; its full sequence is RNA-directed RNA polymerase subunit beta (586 aa).

Positions 259–391 (VRAYSGSCSN…TNEKKTFFDG (133 aa)) constitute a RdRp catalytic domain. Mg(2+)-binding residues include Asp-274, Asp-359, and Asp-360.

In terms of assembly, homodimer; the replicase complex can dimerize. Part of the viral RNA-dependent RNA polymerase complex, the other subunits are the host ribosomal protein S1, EF-Tu and EF-Ts. S1 is needed for the initiation of genomic RNA (+)-strand replication. Requires Mg(2+) as cofactor.

The catalysed reaction is RNA(n) + a ribonucleoside 5'-triphosphate = RNA(n+1) + diphosphate. Functionally, this is the catalytic subunit of the viral RNA-dependent RNA polymerase complex. This complex is involved in viral RNA replication that produces (+)-stranded genomes via a complementary, (-)-stranded intermediate. Binds RNA cooperatively with the host ribosomal protein S1. This Escherichia coli protein is RNA-directed RNA polymerase subunit beta.